Here is a 101-residue protein sequence, read N- to C-terminus: Small ribosomal subunit protein uS14 (101 aa).

The protein belongs to the universal ribosomal protein uS14 family. As to quaternary structure, part of the 30S ribosomal subunit. Contacts proteins S3 and S10.

In terms of biological role, binds 16S rRNA, required for the assembly of 30S particles and may also be responsible for determining the conformation of the 16S rRNA at the A site. This is Small ribosomal subunit protein uS14 from Aliivibrio salmonicida (strain LFI1238) (Vibrio salmonicida (strain LFI1238)).